Reading from the N-terminus, the 195-residue chain is UPF0301 protein Bpro_1142 (195 aa).

This sequence belongs to the UPF0301 (AlgH) family.

This chain is UPF0301 protein Bpro_1142, found in Polaromonas sp. (strain JS666 / ATCC BAA-500).